The chain runs to 790 residues: Probable copper-transporting ATPase SynA (790 aa).

Over 1 to 105 (MPAAIVHSAD…IPPLQQQRLQ (105 aa)) the chain is Cytoplasmic. In terms of domain architecture, HMA spans 14-81 (TSILVEVEGM…EITGLGFRAQ (68 aa)). Residues C25 and C28 each contribute to the Cu cation site. The helical transmembrane segment at 106–125 (LAIAAFLLIVSSWGHLGHWL) threads the bilayer. Residues 126 to 134 (DHPLPGTDQ) lie on the Extracellular side of the membrane. Residues 135–154 (LWFHALLAIWALLGPGRSIL) form a helical membrane-spanning segment. At 155–166 (QAGWQGLRCGAP) the chain is on the cytoplasmic side. Residues 167 to 189 (NMNSLVLLGTGSAYLASLVALLW) traverse the membrane as a helical segment. Residues 190–193 (PQLG) lie on the Extracellular side of the membrane. A helical membrane pass occupies residues 194–211 (WVCFLDEPVMLLGFILLG). The Cytoplasmic portion of the chain corresponds to 212–357 (RTLEEQARFR…RKAPVQRFAD (146 aa)). A helical membrane pass occupies residues 358–380 (AIAGRFVYGVCAIAALTFGFWAT). The Extracellular portion of the chain corresponds to 381–416 (LGSRWWPQVLQQPLPGLLIHAPHHGMEMAHPHSHSP). The chain crosses the membrane as a helical span at residues 417–439 (LLLALTLAISVLVVACPCALGLA). Topologically, residues 440–726 (TPTAILVATG…QMGLRTIRQN (287 aa)) are cytoplasmic. D476 serves as the catalytic 4-aspartylphosphate intermediate. 2 residues coordinate Mg(2+): D669 and D673. The helical transmembrane segment at 727–749 (LTWALGYNVVMLPLAAGAFLPAY) threads the bilayer. Over 750–753 (GLAL) the chain is Extracellular. The helical transmembrane segment at 754–776 (TPAIAGACMAVSSLAVVSNSLLL) threads the bilayer. The Cytoplasmic segment spans residues 777 to 790 (RYWFRRSLNHSVSV).

This sequence belongs to the cation transport ATPase (P-type) (TC 3.A.3) family. Type IB subfamily.

The protein localises to the cell membrane. The catalysed reaction is Cu(2+)(in) + ATP + H2O = Cu(2+)(out) + ADP + phosphate + H(+). Functionally, involved in copper transport. In Synechococcus sp. (strain ATCC 27144 / PCC 6301 / SAUG 1402/1) (Anacystis nidulans), this protein is Probable copper-transporting ATPase SynA (synA).